The sequence spans 438 residues: UDP-N-acetylglucosamine 1-carboxyvinyltransferase (438 aa).

35-36 (KN) provides a ligand contact to phosphoenolpyruvate. Position 105 (Arg-105) interacts with UDP-N-acetyl-alpha-D-glucosamine. Cys-129 (proton donor) is an active-site residue. Cys-129 is subject to 2-(S-cysteinyl)pyruvic acid O-phosphothioketal. Residues 134–138 (RPVDL), Asp-321, and Val-343 contribute to the UDP-N-acetyl-alpha-D-glucosamine site.

Belongs to the EPSP synthase family. MurA subfamily.

It is found in the cytoplasm. The catalysed reaction is phosphoenolpyruvate + UDP-N-acetyl-alpha-D-glucosamine = UDP-N-acetyl-3-O-(1-carboxyvinyl)-alpha-D-glucosamine + phosphate. Its pathway is cell wall biogenesis; peptidoglycan biosynthesis. Its function is as follows. Cell wall formation. Adds enolpyruvyl to UDP-N-acetylglucosamine. This chain is UDP-N-acetylglucosamine 1-carboxyvinyltransferase, found in Synechocystis sp. (strain ATCC 27184 / PCC 6803 / Kazusa).